Consider the following 365-residue polypeptide: Eukaryotic translation initiation factor 3 subunit H (365 aa).

One can recognise an MPN domain in the interval 11–160 (VKVEALVVMK…LRAFRLSPKF (150 aa)).

This sequence belongs to the eIF-3 subunit H family. In terms of assembly, component of the eukaryotic translation initiation factor 3 (eIF-3) complex.

It localises to the cytoplasm. Its function is as follows. Component of the eukaryotic translation initiation factor 3 (eIF-3) complex, which is involved in protein synthesis of a specialized repertoire of mRNAs and, together with other initiation factors, stimulates binding of mRNA and methionyl-tRNAi to the 40S ribosome. The eIF-3 complex specifically targets and initiates translation of a subset of mRNAs involved in cell proliferation. The polypeptide is Eukaryotic translation initiation factor 3 subunit H (Aspergillus fumigatus (strain CBS 144.89 / FGSC A1163 / CEA10) (Neosartorya fumigata)).